The chain runs to 181 residues: CDP-diacylglycerol--glycerol-3-phosphate 3-phosphatidyltransferase (181 aa).

Helical transmembrane passes span 8 to 28 (PNYL…LFYI), 35 to 55 (KLGA…GYIA), 64 to 84 (FGKM…TIML), and 148 to 168 (IIYL…LTII).

Belongs to the CDP-alcohol phosphatidyltransferase class-I family.

Its subcellular location is the cell membrane. It carries out the reaction a CDP-1,2-diacyl-sn-glycerol + sn-glycerol 3-phosphate = a 1,2-diacyl-sn-glycero-3-phospho-(1'-sn-glycero-3'-phosphate) + CMP + H(+). Its pathway is phospholipid metabolism; phosphatidylglycerol biosynthesis; phosphatidylglycerol from CDP-diacylglycerol: step 1/2. Its function is as follows. This protein catalyzes the committed step to the synthesis of the acidic phospholipids. The polypeptide is CDP-diacylglycerol--glycerol-3-phosphate 3-phosphatidyltransferase (pgsA) (Rickettsia prowazekii (strain Madrid E)).